The sequence spans 674 residues: Pesticidal crystal protein Cry24Aa (674 aa).

This sequence belongs to the delta endotoxin family.

Its function is as follows. Promotes colloidosmotic lysis by binding to the midgut epithelial cells of insects. The chain is Pesticidal crystal protein Cry24Aa (cry24Aa) from Bacillus thuringiensis subsp. jegathesan.